Reading from the N-terminus, the 542-residue chain is MSKVDKTGYAQWVYLLPERSSMMSFIDSMEDFRFDMLIYFLCFVVLGRAVQWFLRPKPNAPLLNPRRFFEFSDSRAVSEILYSTRQVLEDWFSKYPTKPMRIIADLGQITILPPSMADEIKNDPRLSFIKASTESAFHITIPGFEPFREGAKNEAGLIKNVLHKHLNKTLNHITTPLAEETCLAVQEYFGSDQGWHKVPLRDTLVPLVTRISTRIFLGQDLCRNQEWLRIAASYSSTSAEVANHLRRWPKPLRYLVSLLSPECQNLAKQVRNARALINPILERRRVEEGQEKGTSYNDSLEWFERYAREAYDPAATQLFLSVVSIHTTTDLLCQALEDISSHPEIIKPLQHEIREVLKQEGWNTKALYKMKLLDSVLKESQRLKPVQHATMLRLALEDITLEDGTFIPKGHQISVSCHAMRDNEIYENASSWDGYRYYRQREQSANEHKAQLSSTSPEHMGFGYGIHVCPGRFFAANEVKVIMIYLLLQYEWRTPPGSQPKPLSWCTTWATDPTFELEVRRKGSDDIPVELSHNTFSRESES.

Residues 37–54 (LIYFLCFVVLGRAVQWFL) traverse the membrane as a helical segment. N-linked (GlcNAc...) asparagine glycans are attached at residues Asn167, Asn297, and Asn428. Cys469 is a heme binding site.

Belongs to the cytochrome P450 family. Heme is required as a cofactor.

It localises to the membrane. Its pathway is sesquiterpene biosynthesis; trichothecene biosynthesis. Its function is as follows. Cytochrome P450 monooxygenase; part of 2-gene cluster involved in trichothecene C-8 modification that mediates the biosynthesis of T2-toxin. The biosynthesis of trichothecenes begins with the cyclization of farnesyl diphosphate to trichodiene and is catalyzed by the trichodiene synthase TRI5. Trichodiene undergoes a series of oxygenations catalyzed by the cytochrome P450 monooxygenase TRI4. TRI4 controls the addition of four oxygens at C-2, C-3, C-11, and the C-12, C-13-epoxide to form the intermediate isotrichotriol. Isotrichotriol then undergoes a non-enzymatic isomerization and cyclization to form isotrichodermol. During this process, the oxygen at the C-2 position becomes the pyran ring oxygen and the hydroxyl group at C-11 is lost. More complex type A trichothecenes are built by modifying isotrichodermol through a series of paired hydroxylation and acetylation or acylation steps. Isotrichodermol is converted to isotrichodermin by the acetyltransferase TRI101. TRI101 encodes a C-3 transacetylase that acts as a self-protection or resistance factor during biosynthesis and that the presence of a free C-3 hydroxyl group is a key component of Fusarium trichothecene phytotoxicity. A second hydroxyl group is added to C-15 by the trichothecene C-15 hydroxylase TRI11, producing 15-decalonectrin, which is then acetylated by TRI3, producing calonectrin. A third hydroxyl group is added at C-4 by the cytochrome P450 monooxygenase TRI13, converting calonectrin to 3,15-diacetoxyspirpenol, which is subsequently acetylated by the acetyltransferase TRI7. A fourth hydroxyl group is added to C-8 by the cytochrome P450 monooxygenase TRI1, followed by the addition of an isovaleryl moiety by TRI16. Finally, the acetyl group is removed from the C-3 position by the trichothecene C-3 esterase TRI8 to produce T-2 toxin. The protein is Cytochrome P450 monooxygenase TRI1 of Fusarium sporotrichioides.